Reading from the N-terminus, the 543-residue chain is Serine/threonine-protein kinase PkaA (543 aa).

Residues 8–276 (YLLEEPLGRG…ENLARGLRVV (269 aa)) form the Protein kinase domain. ATP contacts are provided by residues 14–22 (LGRGATGTV) and Lys48. The Proton acceptor role is filled by Asp142. The disordered stretch occupies residues 303 to 480 (PAPAQVPGAP…RQRSANPMRI (178 aa)). Over residues 352 to 361 (VMPPVPPGQP) the composition is skewed to pro residues. Composition is skewed to low complexity over residues 407 to 420 (RQVS…RQAP) and 428 to 451 (PGYG…QPQR). Positions 452–461 (YAPPPAPEPQ) are enriched in pro residues.

This sequence belongs to the protein kinase superfamily. Ser/Thr protein kinase family. In terms of processing, autophosphorylated mainly at Thr and slightly at Ser.

It catalyses the reaction L-seryl-[protein] + ATP = O-phospho-L-seryl-[protein] + ADP + H(+). The enzyme catalyses L-threonyl-[protein] + ATP = O-phospho-L-threonyl-[protein] + ADP + H(+). The polypeptide is Serine/threonine-protein kinase PkaA (pkaA) (Streptomyces coelicolor (strain ATCC BAA-471 / A3(2) / M145)).